The primary structure comprises 340 residues: Eukaryotic translation initiation factor 3 subunit I (340 aa).

WD repeat units lie at residues 8–47, 50–89, 91–135, 150–189, 194–233, and 291–330; these read GHERSLNQIRFNHDGDLLFSVAKDKILCAWYSANGERLGT, GHQGALWTVDVSPGTVLLATGAADNTVRLWNAKSGECVKV, DFPT…GEGN, CEQSKATVAGWSFLGKYIIAGHEDGSVSQYDSKTGEQLQN, EFDYQINDLQFSADRTYFITASKDKSAKIISCRDLQVMKT, and GHFGPLNTIAVHPAGTGYASGGEDGYVRVHHFDKPYFDFM.

It belongs to the eIF-3 subunit I family. In terms of assembly, component of the eukaryotic translation initiation factor 3 (eIF-3) complex.

The protein resides in the cytoplasm. Functionally, component of the eukaryotic translation initiation factor 3 (eIF-3) complex, which is involved in protein synthesis of a specialized repertoire of mRNAs and, together with other initiation factors, stimulates binding of mRNA and methionyl-tRNAi to the 40S ribosome. The eIF-3 complex specifically targets and initiates translation of a subset of mRNAs involved in cell proliferation. This Coccidioides immitis (strain RS) (Valley fever fungus) protein is Eukaryotic translation initiation factor 3 subunit I.